Here is a 379-residue protein sequence, read N- to C-terminus: Queuine tRNA-ribosyltransferase (379 aa).

Asp-94 functions as the Proton acceptor in the catalytic mechanism. Substrate-binding positions include 94-98 (DSGGF), Asp-148, Gln-191, and Gly-218. Residues 249 to 255 (GVGSPDS) are RNA binding. The active-site Nucleophile is the Asp-268. Residues 273–277 (TRIAR) form an RNA binding; important for wobble base 34 recognition region. 4 residues coordinate Zn(2+): Cys-306, Cys-308, Cys-311, and His-337.

The protein belongs to the queuine tRNA-ribosyltransferase family. As to quaternary structure, homodimer. Within each dimer, one monomer is responsible for RNA recognition and catalysis, while the other monomer binds to the replacement base PreQ1. The cofactor is Zn(2+).

The catalysed reaction is 7-aminomethyl-7-carbaguanine + guanosine(34) in tRNA = 7-aminomethyl-7-carbaguanosine(34) in tRNA + guanine. It functions in the pathway tRNA modification; tRNA-queuosine biosynthesis. Catalyzes the base-exchange of a guanine (G) residue with the queuine precursor 7-aminomethyl-7-deazaguanine (PreQ1) at position 34 (anticodon wobble position) in tRNAs with GU(N) anticodons (tRNA-Asp, -Asn, -His and -Tyr). Catalysis occurs through a double-displacement mechanism. The nucleophile active site attacks the C1' of nucleotide 34 to detach the guanine base from the RNA, forming a covalent enzyme-RNA intermediate. The proton acceptor active site deprotonates the incoming PreQ1, allowing a nucleophilic attack on the C1' of the ribose to form the product. After dissociation, two additional enzymatic reactions on the tRNA convert PreQ1 to queuine (Q), resulting in the hypermodified nucleoside queuosine (7-(((4,5-cis-dihydroxy-2-cyclopenten-1-yl)amino)methyl)-7-deazaguanosine). This chain is Queuine tRNA-ribosyltransferase, found in Listeria welshimeri serovar 6b (strain ATCC 35897 / DSM 20650 / CCUG 15529 / CIP 8149 / NCTC 11857 / SLCC 5334 / V8).